The chain runs to 149 residues: Large ribosomal subunit protein bL9 (149 aa).

Belongs to the bacterial ribosomal protein bL9 family.

Binds to the 23S rRNA. The polypeptide is Large ribosomal subunit protein bL9 (Aliivibrio fischeri (strain ATCC 700601 / ES114) (Vibrio fischeri)).